A 348-amino-acid polypeptide reads, in one-letter code: GTPase Obg 1 (348 aa).

An Obg domain is found at 1 to 159 (MSFVDEAKIH…HCVLLKLKIV (159 aa)). The OBG-type G domain maps to 160–329 (SDVGIIGMPN…LHAQVKKAVV (170 aa)). GTP is bound by residues 166-173 (GMPNAGKS), 191-195 (FTTLE), 212-215 (DIPG), 279-282 (NKCD), and 310-312 (GDE). Mg(2+) contacts are provided by Ser173 and Thr193.

Belongs to the TRAFAC class OBG-HflX-like GTPase superfamily. OBG GTPase family. Monomer. Mg(2+) is required as a cofactor.

The protein localises to the cytoplasm. In terms of biological role, an essential GTPase which binds GTP, GDP and possibly (p)ppGpp with moderate affinity, with high nucleotide exchange rates and a fairly low GTP hydrolysis rate. Plays a role in control of the cell cycle, stress response, ribosome biogenesis and in those bacteria that undergo differentiation, in morphogenesis control. This Anaplasma marginale (strain Florida) protein is GTPase Obg 1.